A 1382-amino-acid polypeptide reads, in one-letter code: Hepatocyte growth factor receptor (1382 aa).

The N-terminal stretch at 1-24 is a signal peptide; the sequence is MKAPAVLAPGILVLLFTLVQKSYG. Over 25 to 933 the chain is Extracellular; sequence ECREALVKSE…VIVQPDQNFT (909 aa). In terms of domain architecture, Sema spans 27 to 516; it reads REALVKSEMN…TGKKITKIPL (490 aa). Asn45 is a glycosylation site (N-linked (GlcNAc...) asparagine). 4 cysteine pairs are disulfide-bonded: Cys95–Cys101, Cys98–Cys160, Cys133–Cys141, and Cys173–Cys176. N-linked (GlcNAc...) asparagine glycosylation is present at Asn106. Residues Asn203 and Asn359 are each glycosylated (N-linked (GlcNAc...) asparagine). 2 cysteine pairs are disulfide-bonded: Cys299-Cys364 and Cys386-Cys398. N-linked (GlcNAc...) asparagine glycans are attached at residues Asn400 and Asn406. 4 disulfides stabilise this stretch: Cys521–Cys539, Cys527–Cys562, Cys530–Cys546, and Cys542–Cys552. IPT/TIG domains are found at residues 564–656, 658–740, and 743–837; these read PTIY…FSYV, PVIT…FSYQ, and PIVY…LIYV. Residue Thr583 is glycosylated (O-linked (Man) threonine). N-linked (GlcNAc...) asparagine glycans are attached at residues Asn608 and Asn636. O-linked (Man) threonine glycans are attached at residues Thr677 and Thr762. N-linked (GlcNAc...) asparagine glycans are attached at residues Asn786, Asn880, and Asn931. A helical transmembrane segment spans residues 934–956; the sequence is GLIVGVISISIILLLLLGVFLWL. Topologically, residues 957–1382 are cytoplasmic; the sequence is KKRKQIKDLG…QDNIDGEGDT (426 aa). Ser967 is subject to Phosphoserine. Residue Thr978 is modified to Phosphothreonine. A phosphoserine mark is found at Ser991, Ser998, and Ser1001. At Tyr1004 the chain carries Phosphotyrosine. Residues 1079-1346 enclose the Protein kinase domain; it reads VHFNEVIGRG…RISAIFSTFI (268 aa). ATP contacts are provided by residues 1085–1093 and Lys1111; that span reads IGRGHFGCV. Residue Asp1205 is the Proton acceptor of the active site. The interval 1213–1382 is interaction with RANBP9; it reads LDEKFTVKVA…QDNIDGEGDT (170 aa). Tyr1231 bears the Phosphotyrosine mark. 2 positions are modified to phosphotyrosine; by autocatalysis: Tyr1235 and Tyr1236. Thr1290 carries the post-translational modification Phosphothreonine. Residues 1321–1360 form an interaction with MUC20 region; it reads WHPKAELRPSFSELVSRISAIFSTFIGEHYVHVNATYVNV. Phosphotyrosine; by autocatalysis occurs at positions 1350 and 1357. Phosphotyrosine is present on Tyr1366.

It belongs to the protein kinase superfamily. Tyr protein kinase family. Heterodimer made of an alpha chain (50 kDa) and a beta chain (145 kDa) which are disulfide linked. Binds PLXNB1. Interacts when phosphorylated with downstream effectors including STAT3, PIK3R1, SRC, PCLG1, GRB2 and GAB1. Interacts with SPSB1, SPSB2 and SPSB4. Interacts with INPP5D/SHIP1. When phosphorylated at Tyr-1357, interacts with INPPL1/SHIP2. Interacts with RANBP9 and RANBP10, as well as SPSB1, SPSB2, SPSB3 and SPSB4. SPSB1 binding occurs in the presence and in the absence of HGF, however HGF treatment has a positive effect on this interaction. Interacts with MUC20; prevents interaction with GRB2 and suppresses hepatocyte growth factor-induced cell proliferation. Interacts with GRB10. Interacts with PTPN1 and PTPN2. Interacts with HSP90AA1 and HSP90AB1; the interaction suppresses MET kinase activity. Interacts with tensin TNS3. Interacts (when phosphorylated) with tensin TNS4 (via SH2 domain); the interaction increases MET protein stability by inhibiting MET endocytosis and subsequent lysosomal degradation. Autophosphorylated in response to ligand binding on Tyr-1235 and Tyr-1236 in the kinase domain leading to further phosphorylation of Tyr-1350 and Tyr-1357 in the C-terminal multifunctional docking site. Dephosphorylated by PTPRJ at Tyr-1350 and Tyr-1366. Dephosphorylated by PTPN1 and PTPN2. Post-translationally, ubiquitinated. Ubiquitination by CBL regulates the receptor stability and activity through proteasomal degradation. In terms of processing, O-mannosylation of IPT/TIG domains by TMEM260 is required for protein maturation. O-mannosylated residues are composed of single mannose glycans that are not elongated or modified.

It is found in the membrane. It carries out the reaction L-tyrosyl-[protein] + ATP = O-phospho-L-tyrosyl-[protein] + ADP + H(+). With respect to regulation, in its inactive state, the C-terminal tail interacts with the catalytic domain and inhibits the kinase activity. Upon ligand binding, the C-terminal tail is displaced and becomes phosphorylated, thus increasing the kinase activity. Functionally, receptor tyrosine kinase that transduces signals from the extracellular matrix into the cytoplasm by binding to hepatocyte growth factor/HGF ligand. Regulates many physiological processes including proliferation, scattering, morphogenesis and survival. Ligand binding at the cell surface induces autophosphorylation of MET on its intracellular domain that provides docking sites for downstream signaling molecules. Following activation by ligand, interacts with the PI3-kinase subunit PIK3R1, PLCG1, SRC, GRB2, STAT3 or the adapter GAB1. Recruitment of these downstream effectors by MET leads to the activation of several signaling cascades including the RAS-ERK, PI3 kinase-AKT, or PLCgamma-PKC. The RAS-ERK activation is associated with the morphogenetic effects while PI3K/AKT coordinates prosurvival effects. During embryonic development, MET signaling plays a role in gastrulation, development and migration of muscles and neuronal precursors, angiogenesis and kidney formation. In adults, participates in wound healing as well as organ regeneration and tissue remodeling. Also promotes differentiation and proliferation of hematopoietic cells. This Felis catus (Cat) protein is Hepatocyte growth factor receptor (MET).